Reading from the N-terminus, the 233-residue chain is Large ribosomal subunit protein uL1 (233 aa).

The protein belongs to the universal ribosomal protein uL1 family. In terms of assembly, part of the 50S ribosomal subunit.

Its function is as follows. Binds directly to 23S rRNA. The L1 stalk is quite mobile in the ribosome, and is involved in E site tRNA release. In terms of biological role, protein L1 is also a translational repressor protein, it controls the translation of the L11 operon by binding to its mRNA. In Rhizobium etli (strain ATCC 51251 / DSM 11541 / JCM 21823 / NBRC 15573 / CFN 42), this protein is Large ribosomal subunit protein uL1.